The following is a 426-amino-acid chain: Tol-Pal system protein TolB (426 aa).

An N-terminal signal peptide occupies residues 1–24 (MKLKSRFTSIIGVITLFFSQTVTA).

It belongs to the TolB family. The Tol-Pal system is composed of five core proteins: the inner membrane proteins TolA, TolQ and TolR, the periplasmic protein TolB and the outer membrane protein Pal. They form a network linking the inner and outer membranes and the peptidoglycan layer.

It localises to the periplasm. In terms of biological role, part of the Tol-Pal system, which plays a role in outer membrane invagination during cell division and is important for maintaining outer membrane integrity. The protein is Tol-Pal system protein TolB of Actinobacillus pleuropneumoniae serotype 5b (strain L20).